Consider the following 283-residue polypeptide: 1-deoxypentalenic acid 11-beta-hydroxylase (283 aa).

Substrate is bound at residue Arg117. Positions 135 and 137 each coordinate Fe cation. Residues 135-137 and Trp151 each bind 2-oxoglutarate; that span reads HQD. Arg186 is a substrate binding site. His224 contacts Fe cation. 2-oxoglutarate contacts are provided by Ser226 and Arg238. The segment at 260–283 is disordered; the sequence is WPESAKDASKGILSKITGTPTTAE.

This sequence belongs to the PhyH family. The cofactor is Fe cation. Requires L-ascorbate as cofactor.

It catalyses the reaction 1-deoxypentalenate + 2-oxoglutarate + O2 = 1-deoxy-11beta-hydroxypentalenate + succinate + CO2. It functions in the pathway antibiotic biosynthesis; pentalenolactone biosynthesis. In terms of biological role, catalyzes the conversion of 1-deoxypentalenic acid to 11-beta-hydroxy-1-deoxypentalenic acid in the biosynthesis of pentalenolactone antibiotic. The protein is 1-deoxypentalenic acid 11-beta-hydroxylase (penH) of Streptomyces exfoliatus (Streptomyces hydrogenans).